Consider the following 1002-residue polypeptide: Vacuolar protein sorting-associated protein 18 homolog (1002 aa).

Phosphoserine is present on serine 344. One copy of the CHCR repeat lies at 650-804 (LMAQGSRLEV…DIKGTNDVKK (155 aa)). Residues 827 to 880 (FEKIDNFKEAICDALRDYNQRIQELQREMAETTEQTDRVTAELQQLRQHSLTVE) adopt a coiled-coil conformation. Residues 885–924 (CEICEMMLLVKPFFIFICGHKFHSDCLEKHVVPLLTKEQC) form an RING-type; degenerate zinc finger.

This sequence belongs to the VPS18 family. As to quaternary structure, component of the class C core vacuole/endosome tethering (CORVET) complex composed of at least Vps8, dor/Vps18, car/Vps33A and Vps16A; unlike in other species, Vps11 is not part of the Drosophila complex. Due to the reduced number of components the Drosophila CORVET complex is often referred to as the miniCORVET complex. Interacts with car/Vps33A. Interacts with ema. Component of the homotypic fusion and vacuole protein sorting (HOPS) complex, composed of Vps16A, car/Vps33A, dor/Vps18, Vps39, Vps11 and lt/Vps41. The tethering complex core made up of Vps16A, car/Vps33A and dor/Vps18 and shared by both HOPS and CORVET, preferentially associates with CORVET-specific Vps8 over HOPS-specific lt/Vps41. Interacts with Syx17 (via SNARE domain); the interaction may involve multiple components of the HOPS complex and may promote assembly of the Syx17-Snap29-Vamp7 trans-SNARE complex.

Its subcellular location is the early endosome. The protein localises to the late endosome membrane. It localises to the lysosome membrane. It is found in the cytoplasmic vesicle. The protein resides in the autophagosome. Functionally, core component of the class C core vacuole/endosome tethering (CORVET) and the homotypic fusion and vacuole protein sorting (HOPS) tethering complexes involved in endo-lysosomal vesicle trafficking and lysosome biogenesis. The CORVET complex facilitates docking and fusion of endosomal vesicles during endosome maturation, acts upstream of HOPS, but is not involved in autophagic flux. The CORVET complex may cooperate with the early endosomal tether Rbsn-5 to mediate endosomal fusion. The HOPS complex facilitates docking and fusion of lysosomes with late endosomes and several other types of vesicles. The HOPS complex is also involved in autophagy and crinophagy (the elimination of unused secretory granules through their fusion with lysosomes). The HOPS complex mediates autophagocitic flux, probably by binding autophagosome-associated Syx17/syntaxin 17, promoting assembly of the trans-SNARE complex and instigating autophagosome-lysosome fusion. Independent of Syx17/syntaxin 17, HOPS is involved in biosynthetic transport to lysosomes and lysosome-related organelles such as eye-pigment granules. Required for endocytic degradation of boss/bride of sevenless and N/Notch in developing ommatidia. Required for autophagocytosis-dependent remodeling of myofibrils and transverse-tubules (T-tubules) during metamorphosis. In larval neuromuscular junctions, essential for endosomal sorting that traffics old or dysfunctional synaptic vesicle proteins through a degradative endolysosomal route. Required to maintain normal levels of rush, which functions in endosome formation and trafficking. This chain is Vacuolar protein sorting-associated protein 18 homolog, found in Drosophila melanogaster (Fruit fly).